The following is a 563-amino-acid chain: NAD-dependent malic enzyme (563 aa).

The Proton donor role is filled by Y101. R154 contacts NAD(+). Residue K172 is the Proton acceptor of the active site. Positions 243, 244, and 267 each coordinate a divalent metal cation. NAD(+)-binding residues include D267 and N416.

Belongs to the malic enzymes family. Homotetramer. Mg(2+) is required as a cofactor. Mn(2+) serves as cofactor.

The catalysed reaction is (S)-malate + NAD(+) = pyruvate + CO2 + NADH. It carries out the reaction oxaloacetate + H(+) = pyruvate + CO2. The sequence is that of NAD-dependent malic enzyme from Pseudomonas syringae pv. tomato (strain ATCC BAA-871 / DC3000).